The following is a 104-amino-acid chain: Large ribosomal subunit protein bL21 (104 aa).

The protein belongs to the bacterial ribosomal protein bL21 family. Part of the 50S ribosomal subunit. Contacts protein L20.

Its function is as follows. This protein binds to 23S rRNA in the presence of protein L20. The chain is Large ribosomal subunit protein bL21 from Helicobacter pylori (strain HPAG1).